Here is a 444-residue protein sequence, read N- to C-terminus: MREIVHIQAGQCGNQIGAKFWEVISDEHGIDPTGTYHGDSDLQLDRISVYYNEATGGKYVPRAILVDLEPGTMDSVRSGPFGQIFRPDNFVFGQSGAGNNWAKGHYTEGAELVDSVLDVVRKEAESCDCLQGFQLTHSLGGGTGSGMGTLLISKIREEYPDRIMNTFSVVPSPKVSDTVVEPYNATLSVHQLVENTDETYCIDNEALYDICFRTLKLTTPTYGDLNHLVSATMSGVTTCLRFPGQLNADLRKLAVNMVPFPRLHFFMPGFAPLTSRGSQQYRALTVPELTQQVFDAKNMMAACDPRHGRYLTVAAVFRGRMSMKEVDEQMLNVQNKNSSYFVEWIPNNVKTAVCDIPPRGLKMAVTFIGNSTAIQELFKRISEQFTAMFRRKAFLHWYTGEGMDEMEFTEAESNMNDLVSEYQQYQDATAEEEEDFGEEAEEEA.

The MREI motif signature appears at 1–4 (MREI). Gln11 is a binding site for GTP. At Ser40 the chain carries Phosphoserine. Phosphothreonine is present on Thr55. The residue at position 58 (Lys58) is an N6-acetyllysine; alternate. Lys58 is subject to N6-succinyllysine; alternate. A Glycyl lysine isopeptide (Lys-Gly) (interchain with G-Cter in ubiquitin); alternate cross-link involves residue Lys58. Positions 69, 138, 142, 143, and 144 each coordinate GTP. Residue Glu69 coordinates Mg(2+). Ser172 bears the Phosphoserine; by CDK1 mark. The GTP site is built by Asn204 and Asn226. A phosphothreonine mark is found at Thr285 and Thr290. Residue Arg318 is modified to Omega-N-methylarginine. A Glycyl lysine isopeptide (Lys-Gly) (interchain with G-Cter in ubiquitin) cross-link involves residue Lys324. Residues 423-444 (QQYQDATAEEEEDFGEEAEEEA) are disordered. Residues 429–444 (TAEEEEDFGEEAEEEA) are compositionally biased toward acidic residues. 5-glutamyl polyglutamate occurs at positions 434, 438, 439, and 441. 5-glutamyl glycine is present on residues Glu438, Glu439, Glu441, Glu442, and Glu443.

It belongs to the tubulin family. Heterodimer of alpha and beta chains. A typical microtubule is a hollow water-filled tube with an outer diameter of 25 nm and an inner diameter of 15 nM. Alpha-beta heterodimers associate head-to-tail to form protofilaments running lengthwise along the microtubule wall with the beta-tubulin subunit facing the microtubule plus end conferring a structural polarity. Microtubules usually have 13 protofilaments but different protofilament numbers can be found in some organisms and specialized cells. Interacts with CIMAP3. Interacts with DIAPH1. Interacts with MX1. May interact with RNABP10. Interacts with CFAP157. Nascent tubulin polypeptide interacts (via beta-tubulin MREI motif) with TTC5/STRAP; this interaction results in tubulin mRNA-targeted degradation. Mg(2+) serves as cofactor. Some glutamate residues at the C-terminus are polyglycylated, resulting in polyglycine chains on the gamma-carboxyl group. Glycylation is mainly limited to tubulin incorporated into axonemes (cilia and flagella) whereas glutamylation is prevalent in neuronal cells, centrioles, axonemes, and the mitotic spindle. Both modifications can coexist on the same protein on adjacent residues, and lowering polyglycylation levels increases polyglutamylation, and reciprocally. Cilia and flagella glycylation is required for their stability and maintenance. Flagella glycylation controls sperm motility. Post-translationally, some glutamate residues at the C-terminus are polyglutamylated, resulting in polyglutamate chains on the gamma-carboxyl group. Polyglutamylation plays a key role in microtubule severing by spastin (SPAST). SPAST preferentially recognizes and acts on microtubules decorated with short polyglutamate tails: severing activity by SPAST increases as the number of glutamates per tubulin rises from one to eight, but decreases beyond this glutamylation threshold. Glutamylation is also involved in cilia motility. In terms of processing, phosphorylated on Ser-172 by CDK1 during the cell cycle, from metaphase to telophase, but not in interphase. This phosphorylation inhibits tubulin incorporation into microtubules.

It localises to the cytoplasm. The protein localises to the cytoskeleton. Functionally, tubulin is the major constituent of microtubules, a cylinder consisting of laterally associated linear protofilaments composed of alpha- and beta-tubulin heterodimers. Microtubules grow by the addition of GTP-tubulin dimers to the microtubule end, where a stabilizing cap forms. Below the cap, tubulin dimers are in GDP-bound state, owing to GTPase activity of alpha-tubulin. In Sus scrofa (Pig), this protein is Tubulin beta chain (TUBB).